The primary structure comprises 250 residues: Nuclear transcription factor Y subunit C-4 (250 aa).

A disordered region spans residues 219-250 (GIAYGGQQGHPGYLWQDPQEQQEEPPAEQQSD). Residues 238–250 (EQQEEPPAEQQSD) show a composition bias toward acidic residues.

It belongs to the NFYC/HAP5 subunit family. In terms of assembly, heterotrimeric transcription factor composed of three components, NF-YA, NF-YB and NF-YC. NF-YB and NF-YC must interact and dimerize for NF-YA association and DNA binding. Interacts with NFYB2. Interacts with NFYB8, NFYB10 and HD5/NFYB11.

Its subcellular location is the nucleus. The protein localises to the cytoplasm. Functionally, probable transcription factor involved in the regulation of flowering time under long day (LD) conditions. Functions as a repressor of flowering, independently of HD1 and GHD7. Controls flowering time by negatively regulating the expression of EHD1 and HD3A. Component of the NF-Y/HAP transcription factor complex. The protein is Nuclear transcription factor Y subunit C-4 of Oryza sativa subsp. japonica (Rice).